Consider the following 1105-residue polypeptide: DNA polymerase delta catalytic subunit (1105 aa).

Residues 1–46 (MSSGGRGGKRRGAPPPGPSGAAAKRAHPGGTPQPPPPAATAAAPVA) form a disordered region. The Zn(2+) site is built by Cys1015, Cys1018, Cys1030, and Cys1033. Residues 1015–1033 (CLGCKAVISGSNQTLCFHC) form a CysA-type zinc finger. Residues Cys1062, Cys1065, Cys1075, and Cys1080 each contribute to the [4Fe-4S] cluster site. A CysB motif motif is present at residues 1062 to 1080 (CQECQGSLHQDVLCTSRDC).

Belongs to the DNA polymerase type-B family. Heterodimer with subunits of 125 kDa and 50 kDa. The 125 kDa subunit contains the polymerase active site and most likely the active site for the 3'-5' exonuclease activity. [4Fe-4S] cluster serves as cofactor.

It is found in the nucleus. It carries out the reaction DNA(n) + a 2'-deoxyribonucleoside 5'-triphosphate = DNA(n+1) + diphosphate. This polymerase possesses two enzymatic activities: DNA synthesis (polymerase) and an exonucleolytic activity that degrades single-stranded DNA in the 3'- to 5'-direction. This is DNA polymerase delta catalytic subunit (POLD1) from Oryza sativa subsp. japonica (Rice).